The following is a 305-amino-acid chain: Tyrosine recombinase XerC (305 aa).

One can recognise a Core-binding (CB) domain in the interval 2–88 (TNKQRLVHLF…ALRSFYKFLL (87 aa)). Residues 109 to 295 (RIPSFLYEEE…SKDSLRKTYM (187 aa)) enclose the Tyr recombinase domain. Active-site residues include R149, K173, H247, R250, and H273. Y282 acts as the O-(3'-phospho-DNA)-tyrosine intermediate in catalysis.

It belongs to the 'phage' integrase family. XerC subfamily. In terms of assembly, forms a cyclic heterotetrameric complex composed of two molecules of XerC and two molecules of XerD.

The protein localises to the cytoplasm. Site-specific tyrosine recombinase, which acts by catalyzing the cutting and rejoining of the recombining DNA molecules. The XerC-XerD complex is essential to convert dimers of the bacterial chromosome into monomers to permit their segregation at cell division. It also contributes to the segregational stability of plasmids. The sequence is that of Tyrosine recombinase XerC from Bacillus pumilus (strain SAFR-032).